The primary structure comprises 163 residues: Crossover junction endodeoxyribonuclease RuvC (163 aa).

Active-site residues include Asp7, Glu67, and Asp140. Residues Asp7, Glu67, and Asp140 each contribute to the Mg(2+) site.

The protein belongs to the RuvC family. Homodimer which binds Holliday junction (HJ) DNA. The HJ becomes 2-fold symmetrical on binding to RuvC with unstacked arms; it has a different conformation from HJ DNA in complex with RuvA. In the full resolvosome a probable DNA-RuvA(4)-RuvB(12)-RuvC(2) complex forms which resolves the HJ. The cofactor is Mg(2+).

Its subcellular location is the cytoplasm. The catalysed reaction is Endonucleolytic cleavage at a junction such as a reciprocal single-stranded crossover between two homologous DNA duplexes (Holliday junction).. Functionally, the RuvA-RuvB-RuvC complex processes Holliday junction (HJ) DNA during genetic recombination and DNA repair. Endonuclease that resolves HJ intermediates. Cleaves cruciform DNA by making single-stranded nicks across the HJ at symmetrical positions within the homologous arms, yielding a 5'-phosphate and a 3'-hydroxyl group; requires a central core of homology in the junction. The consensus cleavage sequence is 5'-(A/T)TT(C/G)-3'. Cleavage occurs on the 3'-side of the TT dinucleotide at the point of strand exchange. HJ branch migration catalyzed by RuvA-RuvB allows RuvC to scan DNA until it finds its consensus sequence, where it cleaves and resolves the cruciform DNA. The protein is Crossover junction endodeoxyribonuclease RuvC of Petrotoga mobilis (strain DSM 10674 / SJ95).